The sequence spans 103 residues: Large ribosomal subunit protein bL21 (103 aa).

This sequence belongs to the bacterial ribosomal protein bL21 family. As to quaternary structure, part of the 50S ribosomal subunit. Contacts protein L20.

Functionally, this protein binds to 23S rRNA in the presence of protein L20. The protein is Large ribosomal subunit protein bL21 of Burkholderia ambifaria (strain MC40-6).